A 159-amino-acid polypeptide reads, in one-letter code: SsrA-binding protein (159 aa).

This sequence belongs to the SmpB family.

It localises to the cytoplasm. Its function is as follows. Required for rescue of stalled ribosomes mediated by trans-translation. Binds to transfer-messenger RNA (tmRNA), required for stable association of tmRNA with ribosomes. tmRNA and SmpB together mimic tRNA shape, replacing the anticodon stem-loop with SmpB. tmRNA is encoded by the ssrA gene; the 2 termini fold to resemble tRNA(Ala) and it encodes a 'tag peptide', a short internal open reading frame. During trans-translation Ala-aminoacylated tmRNA acts like a tRNA, entering the A-site of stalled ribosomes, displacing the stalled mRNA. The ribosome then switches to translate the ORF on the tmRNA; the nascent peptide is terminated with the 'tag peptide' encoded by the tmRNA and targeted for degradation. The ribosome is freed to recommence translation, which seems to be the essential function of trans-translation. This Frankia casuarinae (strain DSM 45818 / CECT 9043 / HFP020203 / CcI3) protein is SsrA-binding protein.